The following is a 240-amino-acid chain: Ornithine decarboxylase antizyme (240 aa).

Disordered regions lie at residues Arg-18–Gly-45 and Asp-69–Phe-95. Residues Pro-21–Ile-33 show a composition bias toward polar residues. A compositionally biased stretch (low complexity) spans Ser-34–Ser-43. Over residues Asp-69 to Ser-84 the composition is skewed to basic and acidic residues. The segment covering Ile-85–Phe-95 has biased composition (polar residues).

This sequence belongs to the ODC antizyme family. In terms of assembly, interacts with ODC1 and thereby sterically blocks ODC homodimerization. Preferentially expressed in adult female midguts.

Its function is as follows. Ornithine decarboxylase (ODC) antizyme protein that negatively regulates ODC activity and intracellular polyamine biosynthesis and uptake in response to increased intracellular polyamine levels. Binds to ODC monomers, inhibiting the assembly of the functional ODC homodimer, and targets the monomers for ubiquitin-independent proteolytic destruction by the 26S proteasome. In Aedes aegypti (Yellowfever mosquito), this protein is Ornithine decarboxylase antizyme (Oda).